The primary structure comprises 172 residues: Large ribosomal subunit protein bL17 (172 aa).

A disordered region spans residues 123 to 172 (ATGSKRAQTEEAASQEPAAEAGKQPAEGATSVQTAEAADASQAEGEAEEK). The segment covering 132–143 (EEAASQEPAAEA) has biased composition (low complexity).

This sequence belongs to the bacterial ribosomal protein bL17 family. Part of the 50S ribosomal subunit. Contacts protein L32.

The polypeptide is Large ribosomal subunit protein bL17 (Thermobifida fusca (strain YX)).